The primary structure comprises 200 residues: MIKLTARQQQILDLIRDHIAETGYPPTRAEIAEILGFKSANAAEEHLKALARKGAIEMIAGASRGIRLPEVQSGIPLVGRVAAGSPILAQEHIEDYCDIPHNFFSPKADFLLTVHGMSMKDIGILDGDLLAVHKTDQVRNGDIVVARIDNEVTVKRFKRERNRAQVELWPENPDFNVIEVDLRDANFAIEGLSVGVIRRS.

The segment at residues 28-48 (RAEIAEILGFKSANAAEEHLK) is a DNA-binding region (H-T-H motif). Active-site for autocatalytic cleavage activity residues include Ser-118 and Lys-155.

The protein belongs to the peptidase S24 family. Homodimer.

The catalysed reaction is Hydrolysis of Ala-|-Gly bond in repressor LexA.. Represses a number of genes involved in the response to DNA damage (SOS response), including recA and lexA. In the presence of single-stranded DNA, RecA interacts with LexA causing an autocatalytic cleavage which disrupts the DNA-binding part of LexA, leading to derepression of the SOS regulon and eventually DNA repair. The chain is LexA repressor from Teredinibacter turnerae (strain ATCC 39867 / T7901).